Consider the following 1733-residue polypeptide: Polyketide synthase Pks13 (1733 aa).

The Carrier 1 domain occupies 17–95 (ELTVPEMRQW…SLATRIIEGE (79 aa)). O-(pantetheine 4'-phosphoryl)serine is present on Ser55. Residues 116 to 541 (RVDIAIVGLS…GANAHVVVRE (426 aa)) enclose the Ketosynthase family 3 (KS3) domain. The active-site Acyl-thioester intermediate; for beta-ketoacyl synthase activity is Cys287. Catalysis depends on for beta-ketoacyl synthase activity residues His423 and His463. Positions 548–560 (VEKEPEPEPEPKA) are enriched in basic and acidic residues. The segment at 548-567 (VEKEPEPEPEPKAAAEPAEA) is disordered. Residues 713–1034 (VWVLAGFGAQ…MVSTMAQLYV (322 aa)) are acyltransferase. Ser801 functions as the Acyl-ester intermediate; for acyltransferase activity in the catalytic mechanism. Positions 1232–1309 (ETIAERLGLI…KLIEYAVEHR (78 aa)) constitute a Carrier 2 domain. Ser1266 is subject to O-(pantetheine 4'-phosphoryl)serine. Residues 1344 to 1368 (PVDSEAGVALPSPQNGEQPNPTGPA) are disordered. The tract at residues 1470–1563 (PVFVFHPAGG…RFVGLIDAVR (94 aa)) is thioesterase-like. Residue Ser1533 is the For thioesterase-like activity of the active site.

Post-translationally, 4'-phosphopantetheine is transferred from CoA to specific serines of apo-Pks13 by PptT.

The protein operates within lipid metabolism; mycolic acid biosynthesis. With respect to regulation, the presence of FadD32 is necessary for the transfer of the acyl chain from the AMP carrier onto Pks13. In terms of biological role, involved in the biosynthesis of mycolic acids. Forms, with FadD32, the initiation module of the mycolic condensation system. Synthesizes, in coupled reaction with FadD32, the biosynthetic precursors of mycolic acids, alpha-alkyl beta-ketoacids, via the condensation of two long chain fatty acid derivatives, a very long meromycoloyl-AMP and a shorter 2-carboxyacyl-CoA. The acyl chain of the acyl-AMP produced by FadD32 is specifically transferred onto the N-terminal ACP domain of Pks13, and then transferred onto the KS domain. The extender unit carboxyacyl-CoA is specifically loaded onto the AT domain, which catalyzes the covalent attachment of the carboxyacyl chain to its active site, and its subsequent transfer onto the P-pant arm of the C-terminal ACP domain. The KS domain catalyzes the condensation between the two loaded fatty acyl chains to produce an alpha-alkyl beta-ketothioester linked to the C-ACP domain. Then, the thioesterase-like domain acts as a transacylase and is responsible for both the release and the transfer of the alpha-alkyl beta-ketoacyl chain onto a polyol acceptor molecule, particularly trehalose, leading to the formation of the trehalose monomycolate precursor. The chain is Polyketide synthase Pks13 from Mycobacterium tuberculosis (strain ATCC 25618 / H37Rv).